The sequence spans 37 residues: Cytochrome b6-f complex subunit 5 (37 aa).

The helical transmembrane segment at 5 to 25 (LLSGIVLGLVPVTITGLFVAA) threads the bilayer.

Belongs to the PetG family. In terms of assembly, the 4 large subunits of the cytochrome b6-f complex are cytochrome b6, subunit IV (17 kDa polypeptide, PetD), cytochrome f and the Rieske protein, while the 4 small subunits are PetG, PetL, PetM and PetN. The complex functions as a dimer.

It localises to the plastid. The protein localises to the chloroplast thylakoid membrane. In terms of biological role, component of the cytochrome b6-f complex, which mediates electron transfer between photosystem II (PSII) and photosystem I (PSI), cyclic electron flow around PSI, and state transitions. PetG is required for either the stability or assembly of the cytochrome b6-f complex. The polypeptide is Cytochrome b6-f complex subunit 5 (Emiliania huxleyi (Coccolithophore)).